The following is a 407-amino-acid chain: Actinorhodin polyketide putative beta-ketoacyl synthase 2 (407 aa).

One can recognise a Ketosynthase family 3 (KS3) domain in the interval 1–402 (MSVLITGVGV…GFNSAAVLRR (402 aa)).

It belongs to the thiolase-like superfamily. Beta-ketoacyl-ACP synthases family.

In Streptomyces coelicolor (strain ATCC BAA-471 / A3(2) / M145), this protein is Actinorhodin polyketide putative beta-ketoacyl synthase 2.